Reading from the N-terminus, the 219-residue chain is MDADFWLDRWREGRTHFHQTRVTPLLQKYWPALDVPAGGQVLVPLAGKSLDMVWLAGQGLRVLGVELSQLAVEQFFDENGLRPEIHQSAQGRHYVAGNLELICGDVFALEDATLAACAGVYDRAALVALPEPMRKRYAREVYGRLGRGCRGILITLDYPQDQMEGPPFSVDDAEVQALYAGHTEARLIDRRDILDKEPKFNQRGVARLDTLVYRLERLG.

S-adenosyl-L-methionine-binding residues include tryptophan 10, leucine 45, glutamate 66, and arginine 123.

Belongs to the class I-like SAM-binding methyltransferase superfamily. TPMT family.

It localises to the cytoplasm. The enzyme catalyses S-adenosyl-L-methionine + a thiopurine = S-adenosyl-L-homocysteine + a thiopurine S-methylether.. In Bordetella bronchiseptica (strain ATCC BAA-588 / NCTC 13252 / RB50) (Alcaligenes bronchisepticus), this protein is Thiopurine S-methyltransferase.